A 300-amino-acid polypeptide reads, in one-letter code: MGFPVVYHPDYVTPIPEEHRFPMPKFRLLHGLLLEDGVIQPEQVYQPQLPDRAWLELVHEPDYVTAYCQGTLTPKAQRRIGLPWSAGVVQRTLTAVGGTILTAQLALEHGLACNTAGGTHHAFPGYGSGFCILNDLAIATRTIQQRGLAQRILIVDLDVHQGDGTAFIFQDDPTVFTFSMHCEVNFPSQKQRSDLDLGLPEGLDDDGYLQILAHHLEDLLSQVKPDLVFYDAGVDTHVGDRLGKLAMTNTGLYRRERLVLSTCLAAGYPVACVIGGGYAKNIHDLVYRHSLLHRAARDVY.

This sequence belongs to the histone deacetylase family.

In terms of biological role, putative deacetylase. This is an uncharacterized protein from Picosynechococcus sp. (strain ATCC 27264 / PCC 7002 / PR-6) (Agmenellum quadruplicatum).